The following is a 384-amino-acid chain: Eukaryotic translation initiation factor 3 subunit M (384 aa).

The 163-residue stretch at 184 to 346 (ENRKAIEAMI…KKILITGAFP (163 aa)) folds into the PCI domain.

This sequence belongs to the eIF-3 subunit M family. In terms of assembly, component of the eukaryotic translation initiation factor 3 (eIF-3) complex.

It is found in the cytoplasm. Functionally, component of the eukaryotic translation initiation factor 3 (eIF-3) complex, which is involved in protein synthesis of a specialized repertoire of mRNAs and, together with other initiation factors, stimulates binding of mRNA and methionyl-tRNAi to the 40S ribosome. The eIF-3 complex specifically targets and initiates translation of a subset of mRNAs involved in cell proliferation. This Schistosoma japonicum (Blood fluke) protein is Eukaryotic translation initiation factor 3 subunit M.